Here is a 231-residue protein sequence, read N- to C-terminus: Octanoyl-[acyl-carrier-protein]:protein N-octanoyltransferase LIPT2, mitochondrial (231 aa).

The BPL/LPL catalytic domain maps to 41–224; sequence GTKAGVLLVC…AFKETFKCTL (184 aa). The residue at position 43 (K43) is an N6-succinyllysine. Residues 85 to 92, 154 to 156, and 167 to 169 each bind substrate; these read RGGLATFH, AIG, and GLA. Catalysis depends on C185, which acts as the Acyl-thioester intermediate.

This sequence belongs to the LipB family.

It localises to the mitochondrion. It carries out the reaction octanoyl-[ACP] + L-lysyl-[protein] = N(6)-octanoyl-L-lysyl-[protein] + holo-[ACP] + H(+). It functions in the pathway protein modification; protein lipoylation via endogenous pathway; protein N(6)-(lipoyl)lysine from octanoyl-[acyl-carrier-protein]: step 1/2. Functionally, catalyzes the transfer of endogenously produced octanoic acid from octanoyl-acyl-carrier-protein onto the lipoyl domains of lipoate-dependent enzymes such as the protein H of the glycine cleavage system (GCSH). Lipoyl-ACP can also act as a substrate although octanoyl-ACP is likely to be the physiological substrate. In Mus musculus (Mouse), this protein is Octanoyl-[acyl-carrier-protein]:protein N-octanoyltransferase LIPT2, mitochondrial.